Here is a 427-residue protein sequence, read N- to C-terminus: Riboflavin transporter rft-1 (427 aa).

Residues Met1–Lys2 lie on the Cytoplasmic side of the membrane. Residues Thr3–Asn23 traverse the membrane as a helical segment. At Ser24–Leu42 the chain is on the extracellular side. The helical transmembrane segment at Pro43–Ile63 threads the bilayer. The Cytoplasmic portion of the chain corresponds to His64–Thr73. The helical transmembrane segment at Val74–Phe94 threads the bilayer. Topologically, residues Trp95 to Tyr111 are extracellular. A helical membrane pass occupies residues Leu112–Met132. At Ala133–Phe139 the chain is on the cytoplasmic side. Residues Leu140 to Ile160 form a helical membrane-spanning segment. Residues Gln161–Ser184 lie on the Extracellular side of the membrane. Residues Met185–Tyr205 form a helical membrane-spanning segment. The Cytoplasmic segment spans residues Lys206–Leu261. The helical transmembrane segment at Ala262–Val282 threads the bilayer. Residues Gln283–Tyr297 are Extracellular-facing. The chain crosses the membrane as a helical span at residues Ala298–Ile318. Topologically, residues Arg319–Pro322 are cytoplasmic. The chain crosses the membrane as a helical span at residues Ile323–Ala343. Residues Leu344–Glu353 are Extracellular-facing. Residues Thr354–Leu374 form a helical membrane-spanning segment. Residues Arg375–Arg391 are Cytoplasmic-facing. The chain crosses the membrane as a helical span at residues Leu392–Pro412. Topologically, residues Leu413 to Arg427 are extracellular.

Belongs to the riboflavin transporter family. As to expression, expressed in intestine.

It localises to the cell membrane. The enzyme catalyses riboflavin(in) = riboflavin(out). Activity is strongly inhibited by riboflavin analogs, such as lumiflavin and lumichrome. Its function is as follows. Riboflavin transporter. Riboflavin transport is Na(+)-independent but pH-sensitive. The polypeptide is Riboflavin transporter rft-1 (Caenorhabditis elegans).